A 308-amino-acid polypeptide reads, in one-letter code: Methionyl-tRNA formyltransferase (308 aa).

A (6S)-5,6,7,8-tetrahydrofolate-binding site is contributed by 109-112 (SLLP).

It belongs to the Fmt family.

The enzyme catalyses L-methionyl-tRNA(fMet) + (6R)-10-formyltetrahydrofolate = N-formyl-L-methionyl-tRNA(fMet) + (6S)-5,6,7,8-tetrahydrofolate + H(+). Functionally, attaches a formyl group to the free amino group of methionyl-tRNA(fMet). The formyl group appears to play a dual role in the initiator identity of N-formylmethionyl-tRNA by promoting its recognition by IF2 and preventing the misappropriation of this tRNA by the elongation apparatus. The protein is Methionyl-tRNA formyltransferase of Salinispora arenicola (strain CNS-205).